The primary structure comprises 453 residues: tRNA-2-methylthio-N(6)-dimethylallyladenosine synthase (453 aa).

One can recognise an MTTase N-terminal domain in the interval Lys-4–Lys-118. [4Fe-4S] cluster-binding residues include Cys-13, Cys-49, Cys-83, Cys-156, Cys-160, and Cys-163. One can recognise a Radical SAM core domain in the interval Glu-142–Arg-388. Residues Arg-390 to Val-453 enclose the TRAM domain.

Belongs to the methylthiotransferase family. MiaB subfamily. Monomer. Requires [4Fe-4S] cluster as cofactor.

The protein resides in the cytoplasm. The enzyme catalyses N(6)-dimethylallyladenosine(37) in tRNA + (sulfur carrier)-SH + AH2 + 2 S-adenosyl-L-methionine = 2-methylsulfanyl-N(6)-dimethylallyladenosine(37) in tRNA + (sulfur carrier)-H + 5'-deoxyadenosine + L-methionine + A + S-adenosyl-L-homocysteine + 2 H(+). Catalyzes the methylthiolation of N6-(dimethylallyl)adenosine (i(6)A), leading to the formation of 2-methylthio-N6-(dimethylallyl)adenosine (ms(2)i(6)A) at position 37 in tRNAs that read codons beginning with uridine. The chain is tRNA-2-methylthio-N(6)-dimethylallyladenosine synthase from Karelsulcia muelleri (strain GWSS) (Sulcia muelleri).